The sequence spans 360 residues: MAKLPVEKMRELERRFGEIEARMSAGPAADVYVKLASEYSELEPVVKKIRDYEKAISEAADLEALLADKTTDKDMRDLAEMELPEVETRIRELEKDMQVLLLPKDAADEKSAILEIRAGTGGSEAALFAGDLFRMYERFAATKGWKVEVLSASEGEAGGYKEIIATITGRGVFSKLKFESGVHRVQRVPETEASGRIHTSAATVAVLPEAEDIDVEIRPEDIRIDTMRASGAGGQHVNTTDSAVRITHLPTGLIVTSSEKSQHQNRAKAMQVLRSRLYDIERQKVDSERSADRKSQVGSGDRSERIRTYNFPQGRVTDHRINLTLYKLDRVIEGEIDELVDALIADYQAGQLAQLGEQQL.

Position 235 is an N5-methylglutamine (glutamine 235). The interval 284 to 304 (KVDSERSADRKSQVGSGDRSE) is disordered.

It belongs to the prokaryotic/mitochondrial release factor family. Methylated by PrmC. Methylation increases the termination efficiency of RF1.

Its subcellular location is the cytoplasm. Functionally, peptide chain release factor 1 directs the termination of translation in response to the peptide chain termination codons UAG and UAA. This chain is Peptide chain release factor 1, found in Agrobacterium fabrum (strain C58 / ATCC 33970) (Agrobacterium tumefaciens (strain C58)).